Here is a 119-residue protein sequence, read N- to C-terminus: Spermidine export protein MdtJ (119 aa).

4 helical membrane-spanning segments follow: residues 1–21, 31–51, 54–74, and 81–101; these read MIYW…TLAL, AGFI…SFSV, IALG…ITLF, and ETLT…ILLI.

The protein belongs to the drug/metabolite transporter (DMT) superfamily. Small multidrug resistance (SMR) (TC 2.A.7.1) family. MdtJ subfamily. Forms a complex with MdtI.

Its subcellular location is the cell inner membrane. Its function is as follows. Catalyzes the excretion of spermidine. This Cronobacter sakazakii (strain ATCC BAA-894) (Enterobacter sakazakii) protein is Spermidine export protein MdtJ (mdtJ).